The primary structure comprises 647 residues: Dihydrolipoyllysine-residue acetyltransferase component of pyruvate dehydrogenase complex (647 aa).

The N-terminal 86 residues, 1-86, are a transit peptide targeting the mitochondrion; it reads MWRVCARRAQ…LWGSPSRRWY (86 aa). One can recognise a Lipoyl-binding 1 domain in the interval 91-167; the sequence is HQKVPLPSLS…PVGAIICITV (77 aa). Residue serine 100 is modified to Phosphoserine. N6-lipoyllysine is present on lysine 132. Residues 184–216 are disordered; that stretch reads SAAPAPPAAPAPTPAAPAPSPTPSAQAPGSSYP. A compositionally biased stretch (pro residues) spans 187–205; sequence PAPPAAPAPTPAAPAPSPT. The region spanning 218–294 is the Lipoyl-binding 2 domain; that stretch reads HMQVLLPALS…PLGTPLCIIV (77 aa). Lysine 259 carries the post-translational modification N6-lipoyllysine. Residues 311–352 are disordered; the sequence is VTDLKPPAPPPIPSPAAPVPPAPQPVAPPPSAPRPAAPAGPK. Over residues 316–348 the composition is skewed to pro residues; it reads PPAPPPIPSPAAPVPPAPQPVAPPPSAPRPAAP. The Peripheral subunit-binding (PSBD) domain occupies 356-393; sequence FVSPLAKKLAAEKGIDLTQVKGTGPDGRIIKKDIDSFV. Position 461 (arginine 461) interacts with CoA. At lysine 466 the chain carries N6-acetyllysine. Lysine 473 bears the N6-succinyllysine mark. CoA is bound at residue serine 475. Lysine 547 carries the N6-succinyllysine modification. CoA contacts are provided by serine 566, asparagine 567, and glycine 591. Residues histidine 620 and aspartate 624 contribute to the active site.

This sequence belongs to the 2-oxoacid dehydrogenase family. In terms of assembly, part of the pyruvate dehydrogenase complex (PDHc) that is a multi-enzyme complex composed of multiple copies of three enzymes, pyruvate dehydrogenase (subunits PDH1A and PDHB, E1 component), dihydrolipoamide acetyltransferase (DLAT, E2 component), and dihydrolipoamide dehydrogenase (DLD, E3 component) to which is added an additional protein the E3-binding protein (PDHX, E3BP). In terms of structural architecture, the E2 and E3BP components assemble into a 60meric central core with icosahedral symmetry. The central core is decorated with E1 and E3 proteins. Currently, two alternative models for the E2:E3BP stoichiometry are considered as being either 48:12 (E2(48)-E3BP(12)) or 40:20 (E2(40)-E3BP(20)). Interacts with PDK2 and PDK3. Interacts with SIRT4. Interacts with PDHB. It depends on (R)-lipoate as a cofactor. Post-translationally, delipoylated at Lys-132 and Lys-259 by SIRT4, delipoylation decreases the PHD complex activity.

The protein localises to the mitochondrion matrix. It catalyses the reaction N(6)-[(R)-dihydrolipoyl]-L-lysyl-[protein] + acetyl-CoA = N(6)-[(R)-S(8)-acetyldihydrolipoyl]-L-lysyl-[protein] + CoA. In terms of biological role, as part of the pyruvate dehydrogenase complex, catalyzes the transfers of an acetyl group to a lipoic acid moiety. The pyruvate dehydrogenase complex, catalyzes the overall conversion of pyruvate to acetyl-CoA and CO(2), and thereby links cytoplasmic glycolysis and the mitochondrial tricarboxylic acid (TCA) cycle. In Bos taurus (Bovine), this protein is Dihydrolipoyllysine-residue acetyltransferase component of pyruvate dehydrogenase complex.